The sequence spans 284 residues: MEINVAKRTGFCSGVQKTYNEVKNSLVDKNKIYIYGELVHNRKVIEELNSAGAITITGMDDIPDDSIDETLIIRAHGISKAEKDLLKKRFSKVIDMTCPIVTNLVKYVEKKQKDGFFVVVYGKPDHPEILGLKGNVDESKLLITLSPVTIPQKKVLIVSQTTMGEEEYKNFITSILTINSFTEVLIRDTICSETILREKETLELSQKSTLMLVLGGKNSSNTQKLYRISKKYCKRTYHIESGEELKEITISPQDKIGIVTGSSTPTSELNKVLEYLSQEKEDFS.

C12 contributes to the [4Fe-4S] cluster binding site. (2E)-4-hydroxy-3-methylbut-2-enyl diphosphate is bound by residues H40 and H76. H40 and H76 together coordinate dimethylallyl diphosphate. Isopentenyl diphosphate-binding residues include H40 and H76. C98 is a [4Fe-4S] cluster binding site. A (2E)-4-hydroxy-3-methylbut-2-enyl diphosphate-binding site is contributed by H126. H126 contacts dimethylallyl diphosphate. Residue H126 coordinates isopentenyl diphosphate. The active-site Proton donor is E128. T161 lines the (2E)-4-hydroxy-3-methylbut-2-enyl diphosphate pocket. [4Fe-4S] cluster is bound at residue C191. (2E)-4-hydroxy-3-methylbut-2-enyl diphosphate is bound by residues S219, S220, N221, and S263. Dimethylallyl diphosphate contacts are provided by S219, S220, N221, and S263. Residues S219, S220, N221, and S263 each contribute to the isopentenyl diphosphate site.

The protein belongs to the IspH family. Requires [4Fe-4S] cluster as cofactor.

It carries out the reaction isopentenyl diphosphate + 2 oxidized [2Fe-2S]-[ferredoxin] + H2O = (2E)-4-hydroxy-3-methylbut-2-enyl diphosphate + 2 reduced [2Fe-2S]-[ferredoxin] + 2 H(+). The enzyme catalyses dimethylallyl diphosphate + 2 oxidized [2Fe-2S]-[ferredoxin] + H2O = (2E)-4-hydroxy-3-methylbut-2-enyl diphosphate + 2 reduced [2Fe-2S]-[ferredoxin] + 2 H(+). The protein operates within isoprenoid biosynthesis; dimethylallyl diphosphate biosynthesis; dimethylallyl diphosphate from (2E)-4-hydroxy-3-methylbutenyl diphosphate: step 1/1. It functions in the pathway isoprenoid biosynthesis; isopentenyl diphosphate biosynthesis via DXP pathway; isopentenyl diphosphate from 1-deoxy-D-xylulose 5-phosphate: step 6/6. In terms of biological role, catalyzes the conversion of 1-hydroxy-2-methyl-2-(E)-butenyl 4-diphosphate (HMBPP) into a mixture of isopentenyl diphosphate (IPP) and dimethylallyl diphosphate (DMAPP). Acts in the terminal step of the DOXP/MEP pathway for isoprenoid precursor biosynthesis. This is 4-hydroxy-3-methylbut-2-enyl diphosphate reductase from Petrotoga mobilis (strain DSM 10674 / SJ95).